A 207-amino-acid chain; its full sequence is Peptidyl-tRNA hydrolase (207 aa).

Y19 lines the tRNA pocket. The Proton acceptor role is filled by H24. 3 residues coordinate tRNA: F70, N72, and N118.

Belongs to the PTH family. Monomer.

It localises to the cytoplasm. The catalysed reaction is an N-acyl-L-alpha-aminoacyl-tRNA + H2O = an N-acyl-L-amino acid + a tRNA + H(+). In terms of biological role, hydrolyzes ribosome-free peptidyl-tRNAs (with 1 or more amino acids incorporated), which drop off the ribosome during protein synthesis, or as a result of ribosome stalling. Functionally, catalyzes the release of premature peptidyl moieties from peptidyl-tRNA molecules trapped in stalled 50S ribosomal subunits, and thus maintains levels of free tRNAs and 50S ribosomes. This is Peptidyl-tRNA hydrolase from Synechococcus sp. (strain CC9311).